Reading from the N-terminus, the 168-residue chain is Large ribosomal subunit protein uL10 (168 aa).

The protein belongs to the universal ribosomal protein uL10 family. Part of the ribosomal stalk of the 50S ribosomal subunit. The N-terminus interacts with L11 and the large rRNA to form the base of the stalk. The C-terminus forms an elongated spine to which L12 dimers bind in a sequential fashion forming a multimeric L10(L12)X complex.

Forms part of the ribosomal stalk, playing a central role in the interaction of the ribosome with GTP-bound translation factors. This is Large ribosomal subunit protein uL10 from Photorhabdus laumondii subsp. laumondii (strain DSM 15139 / CIP 105565 / TT01) (Photorhabdus luminescens subsp. laumondii).